Reading from the N-terminus, the 348-residue chain is MTAPSQVLKIHRPDDWHVHLRDGDMLKTVVPYTSEIYGRAIVMPNLASPITTVDAAIAYRQRILDAVPAGHDFTPLMTCYLTDSLDADELERGFHEGVFTAAKLYPANATTNSSHGVTSIDAIMPVLERMEKLGMPLLVHGEVTHADVDIFDREARFIDTVMEPLRQRLTALKVVFEHITTKDAAQYVRDGNDYLAATITPQHLMFNRNHMLVGGIRPHLYCLPILKRNIHQQALRELVASGFTRAFLGTDSAPHSRHRKETSCGCAGCFNAPSALGSYAVVFEEMNALAHFEAFCSLNGPQFYGLPVNKGWVELVRDEQQIPENIALADDSLVPFLAGETVRWSVKK.

Zn(2+) is bound by residues His-17 and His-19. Residues 19–21 (HLR) and Asn-45 each bind substrate. Residues Lys-103, His-140, and His-178 each contribute to the Zn(2+) site. At Lys-103 the chain carries N6-carboxylysine. His-140 contacts substrate. Leu-223 serves as a coordination point for substrate. Asp-251 contributes to the Zn(2+) binding site. The active site involves Asp-251. Residues His-255 and Ala-267 each coordinate substrate.

It belongs to the metallo-dependent hydrolases superfamily. DHOase family. Class II DHOase subfamily. As to quaternary structure, homodimer. Zn(2+) is required as a cofactor.

It carries out the reaction (S)-dihydroorotate + H2O = N-carbamoyl-L-aspartate + H(+). It functions in the pathway pyrimidine metabolism; UMP biosynthesis via de novo pathway; (S)-dihydroorotate from bicarbonate: step 3/3. Its function is as follows. Catalyzes the reversible cyclization of carbamoyl aspartate to dihydroorotate. This is Dihydroorotase from Salmonella arizonae (strain ATCC BAA-731 / CDC346-86 / RSK2980).